The sequence spans 251 residues: MKVIFNADDFGLTQGVNNGIIKAHQQGVVLSTTMMMGMDAEQHAVELANQNPNLKIGVHLRFTAGNPLTGHPNLTGGGEQFVRFNELWKKRDFQEEAVYQEAVAQVERFLSLGLPLSHIDSHHHAHTHPQLLPVIRRVAEQYRVPLRGSGLCHIDCDTTYHFTDEFYDQGVSLDGVMAHLKSLKSQYDVVEVMCHPADVDQHLLSISGYALLRELELQVLTSPILKQELAEHGMSITDYSTLISTRKFASV.

Residues His59 and His122 each coordinate Mg(2+).

Belongs to the YdjC deacetylase family. Homodimer. Mg(2+) is required as a cofactor.

Probably catalyzes the deacetylation of acetylated carbohydrates an important step in the degradation of oligosaccharides. The chain is Carbohydrate deacetylase from Vibrio campbellii (strain ATCC BAA-1116).